The chain runs to 420 residues: Aminoacyltransferase FemA (420 aa).

It belongs to the FemABX family. Homodimer. Interacts with FemB.

The protein resides in the cytoplasm. The enzyme catalyses beta-D-GlcNAc-(1-&gt;4)-Mur2Ac(oyl-L-Ala-D-isoglutaminyl-L-Lys-(N(6)-Gly)-D-Ala-D-Ala)-di-trans,octa-cis-undecaprenyl diphosphate + 2 glycyl-tRNA(Gly) = MurNAc-L-Ala-D-isoglutaminyl-L-Lys-(N(6)-tri-Gly)-D-Ala-D-Ala-diphospho-di-trans,octa-cis-undecaprenyl-GlcNAc + 2 tRNA(Gly) + 2 H(+). Its function is as follows. Catalyzes the formation of the pentaglycine interpeptide bridge, which is characteristic of the S.aureus peptidoglycan. Adds glycines 2 and 3 of the pentaglycine bridge, using glycyl-tRNA(Gly) as donor. Involved in resistance to methicillin. The sequence is that of Aminoacyltransferase FemA (femA) from Staphylococcus aureus (strain NCTC 8325 / PS 47).